We begin with the raw amino-acid sequence, 570 residues long: NADH-ubiquinone oxidoreductase chain 5 (570 aa).

16 consecutive transmembrane segments (helical) span residues 2–22 (FSFF…FKHF), 27–47 (GVFL…LSNL), 56–76 (LIAI…VNFS), 77–97 (FYID…GVFV), 109–129 (PHIS…IILV), 134–154 (LVVF…LINF), 179–199 (VLIA…EAIL), 221–241 (LISF…GFHV), 251–271 (VPAS…FLIM), 285–305 (LVTA…AVFQ), 311–330 (ILAY…CSFG), 335–357 (VIVY…GNLI), 380–400 (FFFL…FGFY), 417–437 (AIFC…FNIL), 476–496 (IFLL…FYLL), and 524–544 (LLNY…LVLF).

This sequence belongs to the complex I subunit 5 family.

It localises to the mitochondrion inner membrane. It carries out the reaction a ubiquinone + NADH + 5 H(+)(in) = a ubiquinol + NAD(+) + 4 H(+)(out). Functionally, core subunit of the mitochondrial membrane respiratory chain NADH dehydrogenase (Complex I) that is believed to belong to the minimal assembly required for catalysis. Complex I functions in the transfer of electrons from NADH to the respiratory chain. The immediate electron acceptor for the enzyme is believed to be ubiquinone. This Paramecium tetraurelia protein is NADH-ubiquinone oxidoreductase chain 5 (ND5).